Here is a 227-residue protein sequence, read N- to C-terminus: Ribose-5-phosphate isomerase A (227 aa).

Residues 26 to 29, 82 to 85, and 95 to 98 each bind substrate; these read TGST, DGAD, and KGGG. Glu-104 acts as the Proton acceptor in catalysis. Residue Lys-122 coordinates substrate.

It belongs to the ribose 5-phosphate isomerase family. As to quaternary structure, homodimer.

The enzyme catalyses aldehydo-D-ribose 5-phosphate = D-ribulose 5-phosphate. Its pathway is carbohydrate degradation; pentose phosphate pathway; D-ribose 5-phosphate from D-ribulose 5-phosphate (non-oxidative stage): step 1/1. In terms of biological role, catalyzes the reversible conversion of ribose-5-phosphate to ribulose 5-phosphate. The polypeptide is Ribose-5-phosphate isomerase A (Streptococcus equi subsp. zooepidemicus (strain H70)).